Here is a 139-residue protein sequence, read N- to C-terminus: Protein archease (139 aa).

Ca(2+)-binding residues include D12, D138, and I139.

It belongs to the archease family.

Functionally, activates the tRNA-splicing ligase complex by facilitating the enzymatic turnover of catalytic subunit RtcB. Acts by promoting the guanylylation of RtcB, a key intermediate step in tRNA ligation. Can also alter the NTP specificity of RtcB such that ATP, dGTP or ITP is used efficiently. This Sulfurisphaera tokodaii (strain DSM 16993 / JCM 10545 / NBRC 100140 / 7) (Sulfolobus tokodaii) protein is Protein archease.